The chain runs to 354 residues: Guanine nucleotide-binding protein G(i) subunit alpha-1 (354 aa).

Residue G2 is the site of N-myristoyl glycine attachment. C3 carries the S-palmitoyl cysteine lipid modification. Residues 32–354 (REVKLLLLGA…KNNLKDCGLF (323 aa)) form the G-alpha domain. Residues 35–48 (KLLLLGAGESGKST) are G1 motif. GTP contacts are provided by residues 43-48 (ESGKST), 150-151 (DS), and 175-178 (LRTR). S47 contributes to the Mg(2+) binding site. The interval 173–181 (DVLRTRVKT) is G2 motif. Residue T181 participates in Mg(2+) binding. The tract at residues 196-205 (FKMFDVGGQR) is G3 motif. GTP is bound by residues 200 to 204 (DVGGQ), 269 to 272 (NKKD), and A326. The interval 265 to 272 (ILFLNKKD) is G4 motif. Residues 324–329 (TCATDT) are G5 motif.

This sequence belongs to the G-alpha family. G(i/o/t/z) subfamily. Heterotrimeric G proteins are composed of 3 units; alpha, beta and gamma. The alpha chain contains the guanine nucleotide binding site. Part of a spindle orientation complex at least composed of GNAI1, GPSM2 and NUMA1. Identified in complex with the beta subunit GNB1 and the gamma subunit GNG1. Identified in complex with the beta subunit GNB1 and the gamma subunit GNG2. Component of the TAS2R14-GNAI1 complex, consisting of TAS2R14, GNAI1, GNB1 and GNG2; within the complex interacts with TAS2R14; this complex plays a role in the perception of bitterness. GTP binding causes dissociation of the heterotrimer, liberating the individual subunits so that they can interact with downstream effector proteins. Interacts (GDP-bound form) with GPSM1; this inhibits guanine nucleotide exchange and GTP binding. Interacts (GDP-bound form) with GPSM2 (via GoLoco domains); this inhibits guanine nucleotide exchange. Interacts with RGS10; this strongly enhances GTP hydrolysis. Interacts with RGS1 and RGS16. Interacts with RGS4. Interacts with RGS12. Interacts (via active GTP- or inactive GDP-bound forms) with RGS14 (via RGS and GoLoco domains). Interacts with RGS3, RGS6, RGS7, RGS8, RGS17, RGS18 and RGS20 (in vitro). Interacts (GDP-bound form) with RIC8A (via C-terminus); promoting GNAI1 folding and association with the plasma membrane. Interacts (inactive GDP-bound form) with NUCB1 (via GBA motif); the interaction leads to activation of GNAI1. Interacts (inactive GDP-bound form) with CCDC88C/DAPLE (via GBA motif); the interaction leads to activation of GNAI1. Interacts (inactive GDP-bound form) with CCDC8A/GIV (via GBA motif). Interacts with GPR15. Myristoylation at Gly-2 is required for membrane anchoring before palmitoylation. In terms of processing, palmitoylation at Cys-3 varies with membrane lipid composition.

It localises to the nucleus. The protein localises to the cytoplasm. The protein resides in the cell membrane. It is found in the cytoskeleton. Its subcellular location is the microtubule organizing center. It localises to the centrosome. The protein localises to the cell cortex. The protein resides in the membrane. It carries out the reaction GTP + H2O = GDP + phosphate + H(+). Functionally, guanine nucleotide-binding proteins (G proteins) function as transducers downstream of G protein-coupled receptors (GPCRs) in numerous signaling cascades. The alpha chain contains the guanine nucleotide binding site and alternates between an active, GTP-bound state and an inactive, GDP-bound state. Signaling by an activated GPCR promotes GDP release and GTP binding. The alpha subunit has a low GTPase activity that converts bound GTP to GDP, thereby terminating the signal. Both GDP release and GTP hydrolysis are modulated by numerous regulatory proteins. Signaling is mediated via effector proteins, such as adenylate cyclase. Inhibits adenylate cyclase activity of ADCY1, ADCY5 and ADCY6, leading to decreased intracellular cAMP levels. The inactive GDP-bound form prevents the association of RGS14 with centrosomes and is required for the translocation of RGS14 from the cytoplasm to the plasma membrane. Required for normal cytokinesis during mitosis. Required for cortical dynein-dynactin complex recruitment during metaphase. The polypeptide is Guanine nucleotide-binding protein G(i) subunit alpha-1 (Gnai1) (Rattus norvegicus (Rat)).